The primary structure comprises 236 residues: Three prime repair exonuclease 2 (236 aa).

Residues Asp-14 and Glu-16 each coordinate Mg(2+). Residues 16 to 17 (EA) and Tyr-122 contribute to the substrate site. The Proton donor/acceptor role is filled by His-188. Position 193 (Asp-193) interacts with Mg(2+). Asp-193 contacts substrate.

The protein belongs to the exonuclease superfamily. TREX family. Homodimer. It depends on Mg(2+) as a cofactor. Detected in heart, breast, prostate, skeletal muscle, testis, uterus, bone marrow, colon, small intestine, stomach and thymus.

It localises to the nucleus. It catalyses the reaction Exonucleolytic cleavage in the 3'- to 5'-direction to yield nucleoside 5'-phosphates.. Exonuclease with a preference for double-stranded DNA with mismatched 3' termini. May play a role in DNA repair. In Homo sapiens (Human), this protein is Three prime repair exonuclease 2 (TREX2).